A 173-amino-acid polypeptide reads, in one-letter code: Shikimate kinase (173 aa).

12 to 17 (GSGKTT) is a binding site for ATP. Threonine 16 serves as a coordination point for Mg(2+). Residues aspartate 34, arginine 58, and glycine 80 each contribute to the substrate site. Residue arginine 118 participates in ATP binding. Arginine 136 is a substrate binding site.

Belongs to the shikimate kinase family. In terms of assembly, monomer. Mg(2+) is required as a cofactor.

The protein localises to the cytoplasm. It carries out the reaction shikimate + ATP = 3-phosphoshikimate + ADP + H(+). It functions in the pathway metabolic intermediate biosynthesis; chorismate biosynthesis; chorismate from D-erythrose 4-phosphate and phosphoenolpyruvate: step 5/7. In terms of biological role, catalyzes the specific phosphorylation of the 3-hydroxyl group of shikimic acid using ATP as a cosubstrate. The polypeptide is Shikimate kinase (Moorella thermoacetica (strain ATCC 39073 / JCM 9320)).